A 446-amino-acid polypeptide reads, in one-letter code: Putative hydrolase YbfO (446 aa).

An N-terminal signal peptide occupies residues 1-28 (MKRMIVRMTLPLLIVCLAFSSFSASARA).

The polypeptide is Putative hydrolase YbfO (ybfO) (Bacillus subtilis (strain 168)).